The chain runs to 412 residues: Homoserine dehydrogenase (412 aa).

Residues 9-16 (LGIGTVGG) and Lys-105 each bind NADP(+). Substrate is bound at residue Glu-190. Residue Lys-205 is the Proton donor of the active site. One can recognise an ACT domain in the interval 330 to 407 (YLRLRAVDKP…ISGKVTRLRM (78 aa)).

Belongs to the homoserine dehydrogenase family.

It carries out the reaction L-homoserine + NADP(+) = L-aspartate 4-semialdehyde + NADPH + H(+). The enzyme catalyses L-homoserine + NAD(+) = L-aspartate 4-semialdehyde + NADH + H(+). Its pathway is amino-acid biosynthesis; L-methionine biosynthesis via de novo pathway; L-homoserine from L-aspartate: step 3/3. It participates in amino-acid biosynthesis; L-threonine biosynthesis; L-threonine from L-aspartate: step 3/5. The polypeptide is Homoserine dehydrogenase (hom) (Methylobacillus glycogenes).